The chain runs to 155 residues: S-ribosylhomocysteine lyase (155 aa).

Positions 57, 61, and 124 each coordinate Fe cation.

The protein belongs to the LuxS family. Homodimer. Requires Fe cation as cofactor.

The enzyme catalyses S-(5-deoxy-D-ribos-5-yl)-L-homocysteine = (S)-4,5-dihydroxypentane-2,3-dione + L-homocysteine. Involved in the synthesis of autoinducer 2 (AI-2) which is secreted by bacteria and is used to communicate both the cell density and the metabolic potential of the environment. The regulation of gene expression in response to changes in cell density is called quorum sensing. Catalyzes the transformation of S-ribosylhomocysteine (RHC) to homocysteine (HC) and 4,5-dihydroxy-2,3-pentadione (DPD). The chain is S-ribosylhomocysteine lyase from Listeria monocytogenes serotype 4b (strain CLIP80459).